We begin with the raw amino-acid sequence, 603 residues long: Elongation factor 4 (603 aa).

Positions 7-189 constitute a tr-type G domain; sequence SRIRNFSIIA…SIVHLVPPPQ (183 aa). Residues 19–24 and 136–139 contribute to the GTP site; these read DHGKST and NKID.

Belongs to the TRAFAC class translation factor GTPase superfamily. Classic translation factor GTPase family. LepA subfamily.

The protein resides in the cell inner membrane. It catalyses the reaction GTP + H2O = GDP + phosphate + H(+). In terms of biological role, required for accurate and efficient protein synthesis under certain stress conditions. May act as a fidelity factor of the translation reaction, by catalyzing a one-codon backward translocation of tRNAs on improperly translocated ribosomes. Back-translocation proceeds from a post-translocation (POST) complex to a pre-translocation (PRE) complex, thus giving elongation factor G a second chance to translocate the tRNAs correctly. Binds to ribosomes in a GTP-dependent manner. This is Elongation factor 4 from Rippkaea orientalis (strain PCC 8801 / RF-1) (Cyanothece sp. (strain PCC 8801)).